Consider the following 217-residue polypeptide: Nascent polypeptide-associated complex subunit alpha (217 aa).

The segment at 1 to 45 (MPELTEIKSEAAPSTSAEAKPEDVRVEDDGSDSDSDGGMPGLEEA) is disordered. Positions 19 to 28 (AKPEDVRVED) are enriched in basic and acidic residues. The NAC-A/B domain occupies 70–135 (SRGEKKARKI…AKIEDLSQQA (66 aa)). The segment at 154 to 177 (SVGATTSVAPIAEEDEEDVDDTGV) is disordered. A compositionally biased stretch (acidic residues) spans 165 to 176 (AEEDEEDVDDTG). The 41-residue stretch at 177 to 217 (VDEKDIELVITQANTTRAKAIKALKNNNNDIVNAIMELTML) folds into the UBA domain.

The protein belongs to the NAC-alpha family. As to quaternary structure, part of the nascent polypeptide-associated complex (NAC), consisting of Nac-alpha and bicaudal (bic).

Its function is as follows. May promote appropriate targeting of ribosome-nascent polypeptide complexes. Required for correct localization of the osk/oskar protein to the posterior pole during embryonic development. The osk protein directs the recruitment of molecules responsible for posterior body patterning and germline formation in the embryo. The chain is Nascent polypeptide-associated complex subunit alpha (Nacalpha) from Drosophila melanogaster (Fruit fly).